A 1576-amino-acid polypeptide reads, in one-letter code: Proton channel OtopLc (1576 aa).

Disordered regions lie at residues 1–602 and 621–736; these read MDSS…SSPP and QIGS…SSPV. 2 stretches are compositionally biased toward low complexity: residues 58–67 and 76–85; these read SLAEEVLLLV and LLGQPLPTLT. 4 stretches are compositionally biased toward acidic residues: residues 103 to 116, 159 to 171, 186 to 198, and 206 to 216; these read DEGD…EPVP, DDGE…DAEE, SNPD…EEQE, and PKEEDEEEDDD. Over residues 219–228 the composition is skewed to pro residues; that stretch reads TPPPPLPPLP. Positions 229-241 are enriched in polar residues; that stretch reads SNFSYVQGHNLGQ. N230 carries an N-linked (GlcNAc...) asparagine glycan. Residues 243–252 show a composition bias toward low complexity; it reads TPPLTKSPSN. The segment covering 253–264 has biased composition (pro residues); sequence SPSPPVTPPPCP. An N-linked (GlcNAc...) asparagine glycan is attached at N267. Residues 316–341 are compositionally biased toward acidic residues; the sequence is DQPEPEDQPPEPENEPEPEPEPEPEP. Basic and acidic residues predominate over residues 347 to 356; sequence AREDYSRSLD. Over residues 362–376 the composition is skewed to polar residues; that stretch reads TTITTPPSNGYSASS. Residues 384–393 are compositionally biased toward basic and acidic residues; it reads HFAELDEDRG. Residues 402–419 are compositionally biased toward acidic residues; it reads QEPEEEVEEEEEEEEEEL. Over residues 420–433 the composition is skewed to basic and acidic residues; it reads TKETDEISVDRESL. The segment covering 434–457 has biased composition (polar residues); that stretch reads QDQGGDSISSPRPASILTGSISTS. Residues 465 to 507 are compositionally biased toward low complexity; it reads SPKPESRGPSRSGSQRSQLRSGSQQGSIAESRGGSRIGSRTGS. 2 stretches are compositionally biased toward polar residues: residues 519–534 and 545–555; these read PQAS…SQGQ and KSGSQRMQSPQ. Residues 563-575 show a composition bias toward pro residues; that stretch reads MPSPPLMRSPPPE. A compositionally biased stretch (low complexity) spans 661–685; the sequence is AAAAPAVTTTAATTAVTSQPRSHFT. Residues 686–709 are compositionally biased toward basic residues; it reads SSHHHYHLPHQFQHPHHQNHHTHS. The chain crosses the membrane as a helical span at residues 741–761; that stretch reads LFMAGVAPPIAAGAGSLMAMP. The interval 771–845 is disordered; the sequence is GRVSARSGSQ…GSSSQPALSG (75 aa). Residues 776–799 show a composition bias toward polar residues; that stretch reads RSGSQHHVTIDESSLPSHKGNIQE. The segment covering 826 to 839 has biased composition (low complexity); it reads DSSDPPSSPGGSSS. The next 2 membrane-spanning stretches (helical) occupy residues 891 to 911 and 931 to 951; these read ALAT…GIAF and LYLY…LIWG. Polar residues predominate over residues 962–973; sequence PSKSATKASGTD. The tract at residues 962–1001 is disordered; that stretch reads PSKSATKASGTDSMDESDTDSNSVHHRLPPPIPVRRPSLL. A run of 3 helical transmembrane segments spans residues 1019–1039, 1051–1071, and 1084–1104; these read GAVA…GQYF, LLAL…YFIF, and IIAR…WLNV. An N-linked (GlcNAc...) asparagine glycan is attached at N1121. The next 7 helical transmembrane spans lie at 1179–1199, 1239–1259, 1272–1292, 1310–1330, 1340–1360, 1381–1401, and 1412–1432; these read FLFP…YVMW, FVGI…FVLI, VTIC…VGMI, ILLV…VIAG, LVPI…MFIL, IVTF…LEKS, and FYGL…AIFY. An N-linked (GlcNAc...) asparagine glycan is attached at N1479. The tract at residues 1498–1549 is disordered; it reads EEVDSGESNSAEDAGAGAGSGGSRGSGGGAGAAEAGEAGEEGQQGGDSSCGL. Over residues 1503–1512 the composition is skewed to low complexity; the sequence is GESNSAEDAG. Residues 1513 to 1528 are compositionally biased toward gly residues; it reads AGAGSGGSRGSGGGAG.

This sequence belongs to the otopetrin family.

The protein localises to the cell membrane. In terms of biological role, proton-selective channel that specifically transports protons into cells. Proton-selective channel activity is probably required in cell types that use changes in intracellular pH for cell signaling or to regulate biochemical or developmental processes. The chain is Proton channel OtopLc from Drosophila melanogaster (Fruit fly).